The chain runs to 176 residues: Protein CURLY FLAG LEAF 2 (176 aa).

The short motif at 41 to 46 is the EAR element; sequence FLELSS. In terms of domain architecture, WW spans 48–82; that stretch reads FSVPSHLEQCLDLKTGEIYYRSWNSGMRVKEDPRK. Disordered regions lie at residues 77–106 and 111–130; these read KEDPRKSMSRGNYADQSSGESSGTVFSSEE and YESEESSSESSPSSRKYHKE. Low complexity predominate over residues 93 to 106; that stretch reads SSGESSGTVFSSEE.

May interact with BHLH122/CFLAP1 and BHLH80/CFLAP2.

Functionally, may negatively regulate the cuticle development by interacting with the HD-ZIP IV transcription factor HDG1. The sequence is that of Protein CURLY FLAG LEAF 2 from Arabidopsis thaliana (Mouse-ear cress).